We begin with the raw amino-acid sequence, 325 residues long: Centromere protein O (325 aa).

The interval 1 to 35 (MEEERNSDEKENALCGRSLTAASRDGGGRMPAAPL) is disordered. Residues 55–112 (LEMLEAQAHELGLKQEEKEQQEKKLDRLKARVQELRARRDELRAKVELQEKRLLDKEG) are a coiled coil.

It belongs to the CENP-O/MCM21 family. In terms of assembly, component of the CENPA-HI complex, at least composed of CENPH, CENPI, CENPK, CENPL, CENPM, CENPO and CENPP. Component of a discrete complex composed of at least CENPO, CENPP, CENPQ, CENPR and CENPU.

The protein localises to the nucleus. The protein resides in the chromosome. It is found in the centromere. In terms of biological role, component of the CENPA-HI complex, a centromeric complex involved in assembly of kinetochore proteins, mitotic progression and chromosome segregation. Involved in kinetochore assembly and required for recovery from spindle damage. This is Centromere protein O (CENPO) from Gallus gallus (Chicken).